The sequence spans 254 residues: NAD-dependent protein deacetylase 1 (254 aa).

One can recognise a Deacetylase sirtuin-type domain in the interval 5–254 (ASDLRSGVER…GETLGPFVGN (250 aa)). NAD(+) is bound by residues A31, T35, F42, R43, Q108, I110, D111, and H128. Position 42 (F42) interacts with nicotinamide. Nicotinamide is bound by residues I110 and D111. The active-site Proton acceptor is the H128. Zn(2+)-binding residues include C136, C139, C160, and C163. NAD(+)-binding residues include S201, S202, N226, D243, and I244.

Belongs to the sirtuin family. Class U subfamily. Zn(2+) serves as cofactor.

Its subcellular location is the cytoplasm. It catalyses the reaction N(6)-acetyl-L-lysyl-[protein] + NAD(+) + H2O = 2''-O-acetyl-ADP-D-ribose + nicotinamide + L-lysyl-[protein]. Functionally, NAD-dependent protein deacetylase which modulates the activities of several enzymes which are inactive in their acetylated form. This is NAD-dependent protein deacetylase 1 from Bradyrhizobium diazoefficiens (strain JCM 10833 / BCRC 13528 / IAM 13628 / NBRC 14792 / USDA 110).